The sequence spans 128 residues: Calcitonin gene-related peptide 1 (128 aa).

An N-terminal signal peptide occupies residues 1 to 25 (MGFLKFSPFLVVSILLLYQACGLQA). A propeptide spanning residues 26-80 (VPLRSTLESSPGMAATLSEEEARLLLAALVQNYMQMKVRELEQEQEAEGSSVTAQ) is cleaved from the precursor. A disulfide bond links Cys84 and Cys89. Phenylalanine amide is present on Phe119. Residues 125–128 (DLQA) constitute a propeptide that is removed on maturation.

It belongs to the calcitonin family.

Its subcellular location is the secreted. CGRP1/CALCA is a peptide hormone that induces vasodilation mediated by the CALCRL-RAMP1 receptor complex. Dilates a variety of vessels including the coronary, cerebral and systemic vasculature. Its abundance in the CNS also points toward a neurotransmitter or neuromodulator role. It also elevates platelet cAMP. CGRP1 can also bind and activate CALCR-RAMP1 (AMYR1) receptor complex. The sequence is that of Calcitonin gene-related peptide 1 from Rattus norvegicus (Rat).